We begin with the raw amino-acid sequence, 96 residues long: SAGA-associated factor 11 (96 aa).

An SGF11-type zinc finger spans residues 68 to 89; the sequence is FHCKNCGRDVSANRFAAHLQRC.

The protein belongs to the SGF11 family. Component of the 1.8 MDa SAGA transcription coactivator-HAT complex. SAGA is built of 5 distinct domains with specialized functions. Within the SAGA complex, SUS1, SGF11, SGF73 and UBP8 form an additional subcomplex of SAGA called the DUB module (deubiquitination module). Interacts directly with SGF73, SUS1 and UBP8.

Its subcellular location is the nucleus. Its function is as follows. Functions as a component of the transcription regulatory histone acetylation (HAT) complex SAGA. At the promoters, SAGA is required for recruitment of the basal transcription machinery. It influences RNA polymerase II transcriptional activity through different activities such as TBP interaction and promoter selectivity, interaction with transcription activators, and chromatin modification through histone acetylation and deubiquitination. SAGA acetylates nucleosomal histone H3 to some extent (to form H3K9ac, H3K14ac, H3K18ac and H3K23ac). SAGA interacts with DNA via upstream activating sequences (UASs). Involved in transcriptional regulation of a subset of SAGA-regulated genes. Within the SAGA complex, participates in a subcomplex, that specifically deubiquitinates histones H2B. In Vanderwaltozyma polyspora (strain ATCC 22028 / DSM 70294 / BCRC 21397 / CBS 2163 / NBRC 10782 / NRRL Y-8283 / UCD 57-17) (Kluyveromyces polysporus), this protein is SAGA-associated factor 11.